We begin with the raw amino-acid sequence, 715 residues long: Discoidin, CUB and LCCL domain-containing protein 1 (715 aa).

The N-terminal stretch at 1–34 is a signal peptide; sequence MVPGARGGGALARAAGRGLLALLLAVSAPLRLQA. Over 35–459 the chain is Extracellular; it reads EELGDGCGHL…TSTGINITTV (425 aa). Cystine bridges form between C41–C68 and C94–C112. The 110-residue stretch at 41 to 150 folds into the CUB domain; sequence CGHLVTYQDS…RGFLLTYASS (110 aa). N64 carries an N-linked (GlcNAc...) asparagine glycan. Residue N124 is glycosylated (N-linked (GlcNAc...) asparagine). The LCCL domain occupies 152-248; the sequence is HPDLITCLER…RDGSLSDKRF (97 aa). 2 disulfides stabilise this stretch: C158-C174 and C178-C200. An F5/8 type C domain is found at 248-412; the sequence is FLFTSNGCSR…IALKVELIGC (165 aa). N277 is a glycosylation site (N-linked (GlcNAc...) asparagine). The interval 278–312 is disordered; sequence ESGDQVHWSPGQARLQDQGPSWASGDSSNNHKPRE. Polar residues predominate over residues 295-307; that stretch reads QGPSWASGDSSNN. N-linked (GlcNAc...) asparagine glycosylation is found at N351, N418, and N455. The helical transmembrane segment at 460-480 threads the bilayer; sequence AIPLVLLVVLVFAGMGIFAAF. Residues 481–715 are Cytoplasmic-facing; sequence RKKKKKGSPY…LNQTAMTALL (235 aa). A Phosphoserine modification is found at S513. Position 614 is a phosphothreonine (T614). Residues 619–702 are disordered; the sequence is SGYRVPGPQP…SDSYSAPRDC (84 aa).

The protein resides in the membrane. This Homo sapiens (Human) protein is Discoidin, CUB and LCCL domain-containing protein 1 (DCBLD1).